We begin with the raw amino-acid sequence, 158 residues long: NAD(P)H-quinone oxidoreductase subunit J, chloroplastic (158 aa).

It belongs to the complex I 30 kDa subunit family. NDH is composed of at least 16 different subunits, 5 of which are encoded in the nucleus.

It localises to the plastid. Its subcellular location is the chloroplast thylakoid membrane. It catalyses the reaction a plastoquinone + NADH + (n+1) H(+)(in) = a plastoquinol + NAD(+) + n H(+)(out). The enzyme catalyses a plastoquinone + NADPH + (n+1) H(+)(in) = a plastoquinol + NADP(+) + n H(+)(out). NDH shuttles electrons from NAD(P)H:plastoquinone, via FMN and iron-sulfur (Fe-S) centers, to quinones in the photosynthetic chain and possibly in a chloroplast respiratory chain. The immediate electron acceptor for the enzyme in this species is believed to be plastoquinone. Couples the redox reaction to proton translocation, and thus conserves the redox energy in a proton gradient. This Crucihimalaya wallichii (Rock-cress) protein is NAD(P)H-quinone oxidoreductase subunit J, chloroplastic.